A 408-amino-acid polypeptide reads, in one-letter code: Probable acyl-CoA dehydrogenase 6 (408 aa).

Residue Glu-265 is the Proton acceptor of the active site.

Belongs to the acyl-CoA dehydrogenase family. In terms of assembly, homotetramer. Requires FAD as cofactor.

It carries out the reaction 3-methylbutanoyl-CoA + oxidized [electron-transfer flavoprotein] + H(+) = 3-methylbut-2-enoyl-CoA + reduced [electron-transfer flavoprotein]. It functions in the pathway amino-acid degradation; L-leucine degradation; (S)-3-hydroxy-3-methylglutaryl-CoA from 3-isovaleryl-CoA: step 1/3. This is Probable acyl-CoA dehydrogenase 6 (acdh-6) from Caenorhabditis elegans.